The following is a 526-amino-acid chain: MPAVSGPGPLFCLLLLLLDPHSPETGCPPLRRFEYKLSFKGPRLALPGAGIPFWSHHGDAILGLEEVRLTPSMRNRSGAVWSRASVPFSAWEVEVQMRVTGLGRRGAQGMAVWYTRGRGHVGSVLGGLASWDGIGIFFDSPAEDTQDSPAIRVLASDGHIPSEQPGDGASQGLGSCHWDFRNRPHPFRARITYWGQRLRMSLNSGLTPSDPGEFCVDVGPLLLVPGGFFGVSAATGTLADDHDVLSFLTFSLSEPSPEVPPQPFLEMQQLRLARQLEGLWARLGLGTREDVTPKSDSEAQGEGERLFDLEETLGRHRRILQALRGLSKQLAQAERQWKKQLGPPGQARPDGGWALDASCQIPSTPGRGGHLSMSLNKDSAKVGALLHGQWTLLQALQEMRDAAVRMAAEAQVSYLPVGIEHHFLELDHILGLLQEELRGPAKAAAKAPRPPGQPPRASSCLQPGIFLFYLLIQTVGFFGYVHFRQELNKSLQECLSTGSLPLGPAPHTPRALGILRRQPLPASMPA.

Positions 1 to 25 (MPAVSGPGPLFCLLLLLLDPHSPET) are cleaved as a signal peptide. Topologically, residues 26-462 (GCPPLRRFEY…QPPRASSCLQ (437 aa)) are lumenal. Residues 31 to 252 (RRFEYKLSFK…DVLSFLTFSL (222 aa)) form the L-type lectin-like domain. The N-linked (GlcNAc...) asparagine glycan is linked to Asn75. The cysteines at positions 176 and 215 are disulfide-linked. Residues 463-483 (PGIFLFYLLIQTVGFFGYVHF) form a helical membrane-spanning segment. Over 484–526 (RQELNKSLQECLSTGSLPLGPAPHTPRALGILRRQPLPASMPA) the chain is Cytoplasmic.

As to expression, highly expressed in normal and neoplastic prostate. Also expressed in cardiac atrium, salivary gland, spleen and selective cells in the CNS.

It is found in the endoplasmic reticulum-Golgi intermediate compartment membrane. The sequence is that of Protein ERGIC-53-like (LMAN1L) from Homo sapiens (Human).